The chain runs to 238 residues: DNA damage-regulated autophagy modulator protein 1 (238 aa).

The next 6 membrane-spanning stretches (helical) occupy residues Ala9–Val29, Ser53–Thr73, Val91–Ala111, Leu116–Tyr136, Met161–Ile181, and Val200–Ile220.

It belongs to the DRAM/TMEM150 family.

It is found in the lysosome membrane. Its function is as follows. Lysosomal modulator of autophagy that plays a central role in p53/TP53-mediated apoptosis. Not involved in p73/TP73-mediated autophagy. This Mus musculus (Mouse) protein is DNA damage-regulated autophagy modulator protein 1 (Dram1).